The following is a 60-amino-acid chain: Sperm protamine P1 (60 aa).

A disordered region spans residues 1-60; that stretch reads MARYRHSRSRSRSRYQRRRRRRSRYRSQRRRYRRRRGSRRRRRRGRRRGYRRRYSRRRRY.

It belongs to the protamine P1 family. Testis.

The protein resides in the nucleus. It localises to the chromosome. In terms of biological role, protamines substitute for histones in the chromatin of sperm during the haploid phase of spermatogenesis. They compact sperm DNA into a highly condensed, stable and inactive complex. In Phascolarctos cinereus (Koala), this protein is Sperm protamine P1 (PRM1).